A 225-amino-acid chain; its full sequence is Heptaprenylglyceryl phosphate synthase (225 aa).

Lys6 is a binding site for sn-glycerol 1-phosphate. 2 residues coordinate Mg(2+): Asp8 and Thr34. Sn-glycerol 1-phosphate contacts are provided by residues 153–158 (YIEYSG), Gly183, and 203–204 (GN).

The protein belongs to the GGGP/HepGP synthase family. Group I subfamily. As to quaternary structure, homodimer. Requires Mg(2+) as cofactor.

It carries out the reaction sn-glycerol 1-phosphate + all-trans-heptaprenyl diphosphate = 3-heptaprenyl-sn-glycero-1-phosphate + diphosphate. Its pathway is membrane lipid metabolism; glycerophospholipid metabolism. Its function is as follows. Prenyltransferase that catalyzes in vivo the transfer of the heptaprenyl moiety of heptaprenyl pyrophosphate (HepPP; 35 carbon atoms) to the C3 hydroxyl of sn-glycerol-1-phosphate (G1P), producing heptaprenylglyceryl phosphate (HepGP). This reaction is an ether-bond-formation step in the biosynthesis of archaea-type G1P-based membrane lipids found in Bacillales. This Listeria welshimeri serovar 6b (strain ATCC 35897 / DSM 20650 / CCUG 15529 / CIP 8149 / NCTC 11857 / SLCC 5334 / V8) protein is Heptaprenylglyceryl phosphate synthase.